The chain runs to 481 residues: Ribulose bisphosphate carboxylase large chain (481 aa).

A propeptide spanning residues 1 to 2 (MS) is cleaved from the precursor. At proline 3 the chain carries N-acetylproline. Lysine 14 carries the post-translational modification N6,N6,N6-trimethyllysine. 2 residues coordinate substrate: asparagine 123 and threonine 173. The active-site Proton acceptor is the lysine 175. Lysine 177 provides a ligand contact to substrate. Positions 201, 203, and 204 each coordinate Mg(2+). Lysine 201 carries the N6-carboxylysine modification. Histidine 294 acts as the Proton acceptor in catalysis. The substrate site is built by arginine 295, histidine 327, and serine 379.

This sequence belongs to the RuBisCO large chain family. Type I subfamily. In terms of assembly, heterohexadecamer of 8 large chains and 8 small chains; disulfide-linked. The disulfide link is formed within the large subunit homodimers. Requires Mg(2+) as cofactor. Post-translationally, the disulfide bond which can form in the large chain dimeric partners within the hexadecamer appears to be associated with oxidative stress and protein turnover.

The protein localises to the plastid. It is found in the chloroplast. The catalysed reaction is 2 (2R)-3-phosphoglycerate + 2 H(+) = D-ribulose 1,5-bisphosphate + CO2 + H2O. The enzyme catalyses D-ribulose 1,5-bisphosphate + O2 = 2-phosphoglycolate + (2R)-3-phosphoglycerate + 2 H(+). RuBisCO catalyzes two reactions: the carboxylation of D-ribulose 1,5-bisphosphate, the primary event in carbon dioxide fixation, as well as the oxidative fragmentation of the pentose substrate in the photorespiration process. Both reactions occur simultaneously and in competition at the same active site. The chain is Ribulose bisphosphate carboxylase large chain from Coffea arabica (Arabian coffee).